A 167-amino-acid polypeptide reads, in one-letter code: Endoribonuclease YbeY (167 aa).

Residues His131, His135, and His141 each contribute to the Zn(2+) site.

Belongs to the endoribonuclease YbeY family. It depends on Zn(2+) as a cofactor.

It is found in the cytoplasm. Single strand-specific metallo-endoribonuclease involved in late-stage 70S ribosome quality control and in maturation of the 3' terminus of the 16S rRNA. This Rickettsia conorii (strain ATCC VR-613 / Malish 7) protein is Endoribonuclease YbeY.